The sequence spans 117 residues: Holo-[acyl-carrier-protein] synthase (117 aa).

Mg(2+)-binding residues include Asp8 and Glu58.

It belongs to the P-Pant transferase superfamily. AcpS family. It depends on Mg(2+) as a cofactor.

The protein localises to the cytoplasm. It catalyses the reaction apo-[ACP] + CoA = holo-[ACP] + adenosine 3',5'-bisphosphate + H(+). In terms of biological role, transfers the 4'-phosphopantetheine moiety from coenzyme A to a Ser of acyl-carrier-protein. This is Holo-[acyl-carrier-protein] synthase from Shouchella clausii (strain KSM-K16) (Alkalihalobacillus clausii).